An 890-amino-acid polypeptide reads, in one-letter code: Translation initiation factor IF-2 (890 aa).

Residues 45 to 304 form a disordered region; that stretch reads LIDHLNQKNS…LQQGFQKPAQ (260 aa). Positions 67–81 are enriched in polar residues; sequence STLNIPGTGGKSKSV. Basic and acidic residues predominate over residues 92-217; the sequence is VKRDPQEAER…RMAEENKWTD (126 aa). The span at 252–266 shows a compositional bias: basic residues; the sequence is GRGRNAKAARPKKGN. The span at 267-280 shows a compositional bias: basic and acidic residues; it reads KHAESKADREEARA. The tr-type G domain occupies 389-558; sequence PRAPVVTIMG…LLQAEVLELK (170 aa). Positions 398 to 405 are G1; the sequence is GHVDHGKT. 398–405 serves as a coordination point for GTP; it reads GHVDHGKT. The interval 423–427 is G2; sequence GITQH. A G3 region spans residues 444–447; sequence DTPG. GTP-binding positions include 444 to 448 and 498 to 501; these read DTPGH and NKID. Residues 498 to 501 form a G4 region; it reads NKID. Positions 534–536 are G5; the sequence is SAK. At lysine 808 the chain carries N6-acetyllysine.

Belongs to the TRAFAC class translation factor GTPase superfamily. Classic translation factor GTPase family. IF-2 subfamily.

The protein resides in the cytoplasm. Its function is as follows. One of the essential components for the initiation of protein synthesis. Protects formylmethionyl-tRNA from spontaneous hydrolysis and promotes its binding to the 30S ribosomal subunits. Also involved in the hydrolysis of GTP during the formation of the 70S ribosomal complex. In Shigella sonnei (strain Ss046), this protein is Translation initiation factor IF-2.